The chain runs to 233 residues: MTDYHIRIRELPATDKPRERLRASGAAALADAELLAILLRVGVEGVNAIQLAQQLLVEFGGWSGLQRAGFEELAQRRGMGEAKTAQLKAALEIGRRLLLASGEERFQIRSPTDAAQLMQIEMSHLDQEQLRAICLDTKNRVQKIQTVYVGSLNASMVRIGEVFKEAIRLNSASIIVVHNHPSGDPTPSPEDIVVTRQMIEAGRLLDIDVLDHLVIGNGRFVSMRERGLAFIKP.

The MPN domain occupies 107–229 (QIRSPTDAAQ…FVSMRERGLA (123 aa)). Zn(2+)-binding residues include His178, His180, and Asp191. The JAMM motif motif lies at 178–191 (HNHPSGDPTPSPED).

Belongs to the UPF0758 family.

The chain is UPF0758 protein Rcas_0037 from Roseiflexus castenholzii (strain DSM 13941 / HLO8).